The following is a 370-amino-acid chain: Myomodulin neuropeptides 1 (370 aa).

Residues 1–18 (MQVYMLLPLAVFASLTYQ) form the signal peptide. Residues 19-50 (GACEETAAAQTSSDASTSSASSEHAENELSRA) constitute a propeptide that is removed on maturation. The segment covering 28 to 40 (QTSSDASTSSASS) has biased composition (low complexity). The disordered stretch occupies residues 28 to 52 (QTSSDASTSSASSEHAENELSRAKR). 2 positions are modified to leucine amide: leucine 60 and leucine 69. Residues 73 to 190 (GGPVEPESEE…EPEEGGLGEE (118 aa)) constitute a propeptide that is removed on maturation. A leucine amide mark is found at leucine 199 and leucine 209. The span at 210 to 226 (GKREGEEGDEMDKKQDE) shows a compositional bias: basic and acidic residues. Residues 210–230 (GKREGEEGDEMDKKQDESLND) are disordered. A propeptide spanning residues 213 to 237 (EGEEGDEMDKKQDESLNDDFENDDI) is cleaved from the precursor. Leucine 246, leucine 256, leucine 266, leucine 276, leucine 286, leucine 296, leucine 306, leucine 316, leucine 326, leucine 336, and leucine 346 each carry leucine amide. The segment at 344-370 (LRLGKRDDDEKEKKSLNMSRLGKRSTQ) is disordered. The segment covering 347–358 (GKRDDDEKEKKS) has biased composition (basic and acidic residues). A propeptide spanning residues 350–355 (DDDEKE) is cleaved from the precursor. Leucine amide is present on leucine 364. The propeptide occupies 368–370 (STQ).

Expressed in all ganglia of the CNS, but only in a subset of neurons including L10 in the abdominal ganglion and B16 in the buccal ganglion.

It localises to the secreted. In terms of biological role, exogenous application of myomodulins potentiates ARC muscle contraction. This Aplysia californica (California sea hare) protein is Myomodulin neuropeptides 1 (MYOMOD1).